Here is a 263-residue protein sequence, read N- to C-terminus: Type-2Ba cytolytic delta-endotoxin (263 aa).

Belongs to the cyt1/cyt2 endotoxin family. Active after proteolytic processing.

Its function is as follows. Kills the larvae of dipteran insects by making pores in the epithelial cell membrane of the insect midgut. This Bacillus thuringiensis subsp. israelensis protein is Type-2Ba cytolytic delta-endotoxin (cyt2Ba1).